Reading from the N-terminus, the 66-residue chain is MFKEYKIYKFFEQVKQEAYKVVWPTKKELTASTLVVIVAVFVFSLICLVLDYGIHNIIQILLNIGK.

A helical membrane pass occupies residues 34-54 (LVVIVAVFVFSLICLVLDYGI).

Belongs to the SecE/SEC61-gamma family. As to quaternary structure, component of the Sec protein translocase complex. Heterotrimer consisting of SecY, SecE and SecG subunits. The heterotrimers can form oligomers, although 1 heterotrimer is thought to be able to translocate proteins. Interacts with the ribosome. Interacts with SecDF, and other proteins may be involved. Interacts with SecA.

The protein localises to the cell inner membrane. Essential subunit of the Sec protein translocation channel SecYEG. Clamps together the 2 halves of SecY. May contact the channel plug during translocation. The sequence is that of Protein translocase subunit SecE from Rickettsia bellii (strain RML369-C).